The sequence spans 96 residues: Large ribosomal subunit protein bL21 (96 aa).

Belongs to the bacterial ribosomal protein bL21 family. As to quaternary structure, part of the 50S ribosomal subunit. Contacts protein L20.

Its function is as follows. This protein binds to 23S rRNA in the presence of protein L20. In Chlorobium chlorochromatii (strain CaD3), this protein is Large ribosomal subunit protein bL21.